A 256-amino-acid polypeptide reads, in one-letter code: POU domain class 2-associating factor 1 (256 aa).

Positions 1 to 24 (MLWQKSTAPEQAPAPPRPYQGVRV) are disordered. In terms of domain architecture, OCA spans 16-38 (PRPYQGVRVKEPVKELLRRKRGH).

This sequence belongs to the POU2AF family. As to quaternary structure, interacts with POU2F1/OCT1 and POU2F2/OCT2; the interaction increases POU2F1 and POU2F2 transactivation activity. Post-translationally, ubiquitinated; mediated by SIAH1 or SIAH2 and leading to its subsequent proteasomal degradation. B-cell specific.

The protein localises to the nucleus. Its function is as follows. Transcriptional coactivator that specifically associates with either POU2F1/OCT1 or POU2F2/OCT2. It boosts the POU2F1/OCT1 mediated promoter activity and to a lesser extent, that of POU2F2/OCT2. It recognizes the POU domains of POU2F1/OCT1 and POU2F2/OCT2. It is essential for the response of B-cells to antigens and required for the formation of germinal centers. Regulates IL6 expression in B cells as POU2F2/OCT2 coactivator. This chain is POU domain class 2-associating factor 1, found in Mus musculus (Mouse).